Here is a 688-residue protein sequence, read N- to C-terminus: DNA ligase (688 aa).

NAD(+) is bound by residues 42–46 (DAEYD), 91–92 (SL), and Glu-128. Lys-130 (N6-AMP-lysine intermediate) is an active-site residue. NAD(+)-binding residues include Arg-151, Glu-188, Lys-305, and Lys-329. Zn(2+) contacts are provided by Cys-423, Cys-426, Cys-441, and Cys-447. The 81-residue stretch at 608–688 (APQGVLAGKT…GMRKLLEGQL (81 aa)) folds into the BRCT domain.

It belongs to the NAD-dependent DNA ligase family. LigA subfamily. Requires Mg(2+) as cofactor. The cofactor is Mn(2+).

The enzyme catalyses NAD(+) + (deoxyribonucleotide)n-3'-hydroxyl + 5'-phospho-(deoxyribonucleotide)m = (deoxyribonucleotide)n+m + AMP + beta-nicotinamide D-nucleotide.. Its function is as follows. DNA ligase that catalyzes the formation of phosphodiester linkages between 5'-phosphoryl and 3'-hydroxyl groups in double-stranded DNA using NAD as a coenzyme and as the energy source for the reaction. It is essential for DNA replication and repair of damaged DNA. In Paraburkholderia phytofirmans (strain DSM 17436 / LMG 22146 / PsJN) (Burkholderia phytofirmans), this protein is DNA ligase.